Reading from the N-terminus, the 529-residue chain is Polygalacturonase (529 aa).

The signal sequence occupies residues 1-21; that stretch reads MNHRYTLLALAAAALSAGAHA. D305 (proton donor) is an active-site residue. H331 is an active-site residue. Residues 516-529 are required for PGA export across the outer membrane and catalytic activity; it reads AFVPLKSVAPTSPI.

Belongs to the glycosyl hydrolase 28 family. Monomer.

Its subcellular location is the secreted. It carries out the reaction (1,4-alpha-D-galacturonosyl)n+m + H2O = (1,4-alpha-D-galacturonosyl)n + (1,4-alpha-D-galacturonosyl)m.. Functionally, contributes to the wilt disease production on tomato. This chain is Polygalacturonase (pglA), found in Ralstonia solanacearum (Pseudomonas solanacearum).